A 273-amino-acid polypeptide reads, in one-letter code: Large ribosomal subunit protein uL2 (273 aa).

2 disordered regions span residues 32–53 and 221–273; these read PLVE…TTRH and RGTA…RRSK. Residues 39 to 48 show a composition bias toward low complexity; sequence KSGGRNNNGR.

Belongs to the universal ribosomal protein uL2 family. In terms of assembly, part of the 50S ribosomal subunit. Forms a bridge to the 30S subunit in the 70S ribosome.

One of the primary rRNA binding proteins. Required for association of the 30S and 50S subunits to form the 70S ribosome, for tRNA binding and peptide bond formation. It has been suggested to have peptidyltransferase activity; this is somewhat controversial. Makes several contacts with the 16S rRNA in the 70S ribosome. This Erwinia tasmaniensis (strain DSM 17950 / CFBP 7177 / CIP 109463 / NCPPB 4357 / Et1/99) protein is Large ribosomal subunit protein uL2.